Reading from the N-terminus, the 331-residue chain is Ketol-acid reductoisomerase (NADP(+)) (331 aa).

One can recognise a KARI N-terminal Rossmann domain in the interval 2-182; that stretch reads ARMYYDADAN…GGTRAGILET (181 aa). NADP(+) contacts are provided by residues 25 to 28, Ser51, Ser53, and 83 to 86; these read YGSQ and DEVQ. His108 is a catalytic residue. Residue Gly134 participates in NADP(+) binding. In terms of domain architecture, KARI C-terminal knotted spans 183–328; that stretch reads SFREETETDL…KDLRAMFSWL (146 aa). Positions 191, 195, 227, and 231 each coordinate Mg(2+). Ser252 contributes to the substrate binding site.

It belongs to the ketol-acid reductoisomerase family. It depends on Mg(2+) as a cofactor.

It carries out the reaction (2R)-2,3-dihydroxy-3-methylbutanoate + NADP(+) = (2S)-2-acetolactate + NADPH + H(+). It catalyses the reaction (2R,3R)-2,3-dihydroxy-3-methylpentanoate + NADP(+) = (S)-2-ethyl-2-hydroxy-3-oxobutanoate + NADPH + H(+). It participates in amino-acid biosynthesis; L-isoleucine biosynthesis; L-isoleucine from 2-oxobutanoate: step 2/4. The protein operates within amino-acid biosynthesis; L-valine biosynthesis; L-valine from pyruvate: step 2/4. Involved in the biosynthesis of branched-chain amino acids (BCAA). Catalyzes an alkyl-migration followed by a ketol-acid reduction of (S)-2-acetolactate (S2AL) to yield (R)-2,3-dihydroxy-isovalerate. In the isomerase reaction, S2AL is rearranged via a Mg-dependent methyl migration to produce 3-hydroxy-3-methyl-2-ketobutyrate (HMKB). In the reductase reaction, this 2-ketoacid undergoes a metal-dependent reduction by NADPH to yield (R)-2,3-dihydroxy-isovalerate. This chain is Ketol-acid reductoisomerase (NADP(+)), found in Crocosphaera subtropica (strain ATCC 51142 / BH68) (Cyanothece sp. (strain ATCC 51142)).